We begin with the raw amino-acid sequence, 147 residues long: MEIILKEDVVNLGYKNDIVTVKSGYGRNYLIPTGKAVIASPSAKKMLAEELKQRAHKLEKIKKDAEALAAKLEGVSLTIATKVSSTGTIFGSVGNIQIAEELAKLGHEIDRKIIVVKDAVKEVGAYKAIVKLHKEVSVEIPFEVVAE.

The protein belongs to the bacterial ribosomal protein bL9 family.

Binds to the 23S rRNA. This Bacteroides fragilis (strain ATCC 25285 / DSM 2151 / CCUG 4856 / JCM 11019 / LMG 10263 / NCTC 9343 / Onslow / VPI 2553 / EN-2) protein is Large ribosomal subunit protein bL9.